A 144-amino-acid chain; its full sequence is Maximins 9/H3 (144 aa).

Positions 1 to 18 are cleaved as a signal peptide; the sequence is MNFKYIVAVSFLIASAYA. Residues 19-43 constitute a propeptide that is removed on maturation; sequence RSVKNDEQSLSQRDVLEEESLREIR. The residue at position 70 (Y70) is a Tyrosine amide. The propeptide occupies 74 to 123; that stretch reads TAEEHEVMKRLEAIMRDLDSLDHPEEASERETRGFNQDEIANLFTKKEKR. An Isoleucine amide modification is found at I143.

This sequence belongs to the bombinin family. Expressed by the skin glands.

The protein localises to the secreted. Functionally, maximin-9 shows antimicrobial activity against bacteria and against the fungus C.albicans. It has little hemolytic activity. Its function is as follows. Maximin-H3 shows antibacterial activity against both Gram-positive and Gram-negative bacteria. It also shows antimicrobial activity against the fungus C.albicans. Shows strong hemolytic activity. This Bombina maxima (Giant fire-bellied toad) protein is Maximins 9/H3.